The primary structure comprises 331 residues: 6-phosphogluconolactonase (331 aa).

Lys-287 carries the N6-acetyllysine modification.

The protein belongs to the cycloisomerase 2 family.

It carries out the reaction 6-phospho-D-glucono-1,5-lactone + H2O = 6-phospho-D-gluconate + H(+). It participates in carbohydrate degradation; pentose phosphate pathway; D-ribulose 5-phosphate from D-glucose 6-phosphate (oxidative stage): step 2/3. Its function is as follows. Catalyzes the hydrolysis of 6-phosphogluconolactone to 6-phosphogluconate. The chain is 6-phosphogluconolactonase from Escherichia fergusonii (strain ATCC 35469 / DSM 13698 / CCUG 18766 / IAM 14443 / JCM 21226 / LMG 7866 / NBRC 102419 / NCTC 12128 / CDC 0568-73).